The sequence spans 200 residues: Small ribosomal subunit protein uS5 (200 aa).

Positions 1–12 (MGRPRTSQTRGQ) are enriched in polar residues. Residues 1 to 49 (MGRPRTSQTRGQGPSGATGGNPRGGGSTTRERDARGARPGERDGGSEIQ) are disordered. The span at 13–27 (GPSGATGGNPRGGGS) shows a compositional bias: gly residues. Basic and acidic residues predominate over residues 29-49 (TRERDARGARPGERDGGSEIQ). The S5 DRBM domain maps to 48–111 (IQDRVVQIRR…EKARHAMFDV (64 aa)).

It belongs to the universal ribosomal protein uS5 family. As to quaternary structure, part of the 30S ribosomal subunit. Contacts proteins S4 and S8.

In terms of biological role, with S4 and S12 plays an important role in translational accuracy. Located at the back of the 30S subunit body where it stabilizes the conformation of the head with respect to the body. In Rubrobacter xylanophilus (strain DSM 9941 / JCM 11954 / NBRC 16129 / PRD-1), this protein is Small ribosomal subunit protein uS5.